The following is a 337-amino-acid chain: Protein-glutamate methylesterase/protein-glutamine glutaminase of group 3 operon (337 aa).

The 118-residue stretch at 2 to 119 (KIAIVNDMPL…GDAREAAAPL (118 aa)) folds into the Response regulatory domain. Asp53 is modified (4-aspartylphosphate). Residues 144–337 (PLREASQRRG…AGRLTEFFAK (194 aa)) enclose the CheB-type methylesterase domain. Residues Ser160, His187, and Asp280 contribute to the active site.

It belongs to the CheB family. Phosphorylated by CheA. Phosphorylation of the N-terminal regulatory domain activates the methylesterase activity.

The protein localises to the cytoplasm. It carries out the reaction [protein]-L-glutamate 5-O-methyl ester + H2O = L-glutamyl-[protein] + methanol + H(+). The enzyme catalyses L-glutaminyl-[protein] + H2O = L-glutamyl-[protein] + NH4(+). Involved in chemotaxis. Part of a chemotaxis signal transduction system that modulates chemotaxis in response to various stimuli. Catalyzes the demethylation of specific methylglutamate residues introduced into the chemoreceptors (methyl-accepting chemotaxis proteins or MCP) by CheR. Also mediates the irreversible deamidation of specific glutamine residues to glutamic acid. The chain is Protein-glutamate methylesterase/protein-glutamine glutaminase of group 3 operon from Pseudomonas putida (strain ATCC 47054 / DSM 6125 / CFBP 8728 / NCIMB 11950 / KT2440).